The sequence spans 699 residues: TPR repeat-containing thioredoxin TTL1 (699 aa).

The tract at residues 1 to 211 (MPKSVKPISE…SSSRSSSTVA (211 aa)) is disordered. Residues 9–20 (SESDKLSDHLRD) show a composition bias toward basic and acidic residues. Ser39 and Ser42 each carry phosphoserine. Composition is skewed to low complexity over residues 52 to 70 (TTTTTTTTTSSSSSSSSGS) and 83 to 135 (RSNS…TSPA). Over residues 166–182 (SGTGTYGHGSIMRGGGI) the composition is skewed to gly residues. Over residues 195 to 210 (NSPVNVGSSSRSSSTV) the composition is skewed to low complexity. TPR repeat units lie at residues 227–260 (SEEVKRVGNEMYRKGLFNEALKLYDRAIALSPTN), 262–294 (AYRSNRAAALIGLSRIGEAVKECEDAVRSDPNY), 296–328 (RAHHRLALLLIRLGQVNSARKHLCFLGRPSDPM), 419–452 (AYIYFVKAQIEMALGRFENAVMAAEKASQIDPRC), 465–498 (VARARARGNDLYKSERYTEASSAYAEGLRLDPCN), 499–532 (AILYCNRAACWFKLGMWERSIEDCNQALRYQPSY), and 534–566 (KPLLRRAASNSKMERWGAAVSDYEALIRELPHD). Residues 605–691 (QFKSAMNLPG…IVCPSKEVLE (87 aa)) form the Thioredoxin domain.

Expressed in the root elongation zone, stele, root cap, embryo vascular system, leaf axilar buds, silique abscission zone and guard cells.

Functionally, involved in responses to osmotic stress and abscisic acid (ABA). May act as a positive regulator of ABA signaling during germination and seedling development under stress. This Arabidopsis thaliana (Mouse-ear cress) protein is TPR repeat-containing thioredoxin TTL1 (TTL1).